The sequence spans 104 residues: Probable guanidinium efflux system subunit GdnD (104 aa).

The next 4 membrane-spanning stretches (helical) occupy residues 3 to 23 (WICL…MNQF), 31 to 51 (WIFL…LAME), 58 to 78 (AYAV…ILFY), and 84 to 104 (GKRI…KLIS).

This sequence belongs to the drug/metabolite transporter (DMT) superfamily. Small multidrug resistance (SMR) (TC 2.A.7.1) family. YkkC/YkkD subfamily. As to quaternary structure, the efflux pump is composed of GdnC and GdnD.

Its subcellular location is the cell membrane. In terms of biological role, probably involved in guanidinium transport. In Bacillus licheniformis (strain ATCC 14580 / DSM 13 / JCM 2505 / CCUG 7422 / NBRC 12200 / NCIMB 9375 / NCTC 10341 / NRRL NRS-1264 / Gibson 46), this protein is Probable guanidinium efflux system subunit GdnD.